We begin with the raw amino-acid sequence, 88 residues long: Protein Aeq5-like1 (88 aa).

A signal peptide spans 1–20 (MKSVIAVLVLSLVLVNFTQA). Cystine bridges form between C29/C68, C33/C64, C40/C56, and C47/C53.

In terms of tissue distribution, is expressed in the ectodermal cells of gastrulae and planulae. Is also noticeable in the endoderm in late planulae. In the primary polyps, is expressed in both ectoderm (sensory neurons) and endoderm (ganglions). Is not expressed in nematocytes.

Its function is as follows. Probable neuropeptide. In Nematostella vectensis (Starlet sea anemone), this protein is Protein Aeq5-like1.